The following is a 342-amino-acid chain: Protein-glutamate methylesterase/protein-glutamine glutaminase 1 (342 aa).

A Response regulatory domain is found at 3 to 121 (RVLVIDDSLF…NIREIGGELK (119 aa)). Aspartate 54 bears the 4-aspartylphosphate mark. One can recognise a CheB-type methylesterase domain in the interval 141–340 (DSNARNVVLI…EKIVETIRAM (200 aa)). Residues serine 153, histidine 180, and aspartate 282 contribute to the active site.

It belongs to the CheB family. Phosphorylated by CheA. Phosphorylation of the N-terminal regulatory domain activates the methylesterase activity.

It localises to the cytoplasm. It carries out the reaction [protein]-L-glutamate 5-O-methyl ester + H2O = L-glutamyl-[protein] + methanol + H(+). The enzyme catalyses L-glutaminyl-[protein] + H2O = L-glutamyl-[protein] + NH4(+). Involved in chemotaxis. Part of a chemotaxis signal transduction system that modulates chemotaxis in response to various stimuli. Catalyzes the demethylation of specific methylglutamate residues introduced into the chemoreceptors (methyl-accepting chemotaxis proteins or MCP) by CheR. Also mediates the irreversible deamidation of specific glutamine residues to glutamic acid. The sequence is that of Protein-glutamate methylesterase/protein-glutamine glutaminase 1 from Methanospirillum hungatei JF-1 (strain ATCC 27890 / DSM 864 / NBRC 100397 / JF-1).